The following is a 450-amino-acid chain: MKVVISNKAYFKPDDELWDYCSKQTTYHIETMTSKYPIMYKNSGVVAKEIKWIPITRLDLLDAKGIKYELVDKRTLAPVDIPKPKFKLREEDQLPIYEECDDTCIINGKPGFGKTILALALAYKFGQKTLVICTNTSIREMWAAEVRKWFGFEPGIIGSGKYNIDPPIVVSNIQTVNKHANNLSKVFGTVIVDEVHHCVATTFTNFLEISCARYKIGLSGTLKRKDGLQVMFKDFFGYKIFSPPVNNTVAPTIHRYSVPVELSGNQNVPWALRANDVYNHPEYRETIINLAHLYVNMGHKVLIVSDRTELIQTILEALTQRGVTTYEIIGATHLDDRLKIQEDIAKGGPCVLAAAQSIFSEGISLNELSCLIMGSLINNESLIEQLAGRVQRIVEGKLDPIVVDLIMKGGTGLRQASGRMAVYRNNGWKTITMTPEKAVQLAKIAFGNSS.

Residues 95 to 240 form the Helicase ATP-binding domain; the sequence is PIYEECDDTC…MFKDFFGYKI (146 aa). Residue 108–115 participates in ATP binding; that stretch reads GKPGFGKT. A DEAH box motif is present at residues 193-196; it reads DEVH. The 151-residue stretch at 289 to 439 folds into the Helicase C-terminal domain; the sequence is NLAHLYVNMG…TITMTPEKAV (151 aa).

It carries out the reaction ATP + H2O = ADP + phosphate + H(+). In Escherichia phage T5 (Enterobacteria phage T5), this protein is Probable helicase D10 (D10).